Here is a 160-residue protein sequence, read N- to C-terminus: S-ribosylhomocysteine lyase (160 aa).

The Fe cation site is built by H57, H61, and C127.

The protein belongs to the LuxS family. Homodimer. It depends on Fe cation as a cofactor.

It carries out the reaction S-(5-deoxy-D-ribos-5-yl)-L-homocysteine = (S)-4,5-dihydroxypentane-2,3-dione + L-homocysteine. Functionally, involved in the synthesis of autoinducer 2 (AI-2) which is secreted by bacteria and is used to communicate both the cell density and the metabolic potential of the environment. The regulation of gene expression in response to changes in cell density is called quorum sensing. Catalyzes the transformation of S-ribosylhomocysteine (RHC) to homocysteine (HC) and 4,5-dihydroxy-2,3-pentadione (DPD). The polypeptide is S-ribosylhomocysteine lyase (Streptococcus thermophilus (strain CNRZ 1066)).